A 170-amino-acid chain; its full sequence is Photosystem I assembly protein Ycf3 (170 aa).

TPR repeat units lie at residues 35-68 (AFTY…EVDA), 72-105 (SYIL…NPSL), and 120-153 (GEQA…APTN).

The protein belongs to the Ycf3 family.

It localises to the plastid. Its subcellular location is the chloroplast thylakoid membrane. Functionally, essential for the assembly of the photosystem I (PSI) complex. May act as a chaperone-like factor to guide the assembly of the PSI subunits. In Tetradesmus obliquus (Green alga), this protein is Photosystem I assembly protein Ycf3.